A 32-amino-acid chain; its full sequence is Beta-amanitin proprotein (32 aa).

Residues methionine 1–proline 10 constitute a propeptide that is removed on maturation. The segment at residues isoleucine 11–proline 18 is a cross-link (cyclopeptide (Ile-Pro)). A cross-link (2'-cysteinyl-6'-hydroxytryptophan sulfoxide (Trp-Cys)) is located at residues tryptophan 12–cysteine 16. Positions cysteine 19–glutamate 32 are excised as a propeptide.

It belongs to the MSDIN fungal toxin family. Post-translationally, processed by the macrocyclase-peptidase enzyme POPB to yield a toxic cyclic decapeptide. POPB first removes 10 residues from the N-terminus. Conformational trapping of the remaining peptide forces the enzyme to release this intermediate rather than proceed to macrocyclization. The enzyme rebinds the remaining peptide in a different conformation and catalyzes macrocyclization of the N-terminal 8 residues.

In terms of biological role, toxin belonging to the bicyclic octapeptides amatoxins that acts by binding non-competitively to RNA polymerase II and greatly slowing the elongation of transcripts from target promoters. The sequence is that of Beta-amanitin proprotein from Amanita phalloides (Death cap).